The sequence spans 319 residues: Acetyl esterase (319 aa).

The short motif at 91 to 93 is the Involved in the stabilization of the negatively charged intermediate by the formation of the oxyanion hole element; sequence HGG. Residues Ser-165, Asp-262, and His-292 contribute to the active site.

This sequence belongs to the 'GDXG' lipolytic enzyme family. In terms of assembly, homodimer. Interacts with MalT and MelA.

It localises to the cytoplasm. In terms of biological role, displays esterase activity towards short chain fatty esters (acyl chain length of up to 8 carbons). Able to hydrolyze triacetylglycerol (triacetin) and tributyrylglycerol (tributyrin), but not trioleylglycerol (triolein) or cholesterol oleate. Negatively regulates MalT activity by antagonizing maltotriose binding. Inhibits MelA galactosidase activity. The protein is Acetyl esterase of Escherichia coli O7:K1 (strain IAI39 / ExPEC).